The sequence spans 490 residues: MAATGVDKDRPRAMTSTTYLGLLLVGIQVLGFVAAIHAVLTVRTAQGAIAWATSLVFMPYLTLLPYLVFGRSRFDAYIEARRQANREMHLAAAELDWRPWVEEALAARQVSGYKGLKALVRMTRTPTLANNRVRLLVNGEASFEAMFKAISAARQVILVQFFIVRDDALGQRLQQLLLERAANGVEVFFLYDAIGSHALPHRYVERLRQGGVQMHGFSTGSGMLNRFQVNFRNHRKVVVVDGECGFVGGHNVGVEYLGEKPPLAPWRDTHMELRGPAVACLQESFAEDWYWATHSLPPLILPPQYDSEGALCQVVASGPADAQETCSLFFVEMINAAHERVWITSPYFVPDEAVMAALRLAVLRGVDVRLLIPSRPDHRTVYAASSLYALEAIRAGVKVFRYQPGFLHQKVVLVDRDTAAVGSANLDNRSFRLNFEVMVVTVDEGFAGEVEAMLEADFAESLEFTPEDRRSVRRLQQLGMRVARLVSPIL.

Transmembrane regions (helical) follow at residues 20–40 (LGLLLVGIQVLGFVAAIHAVL) and 49–69 (IAWATSLVFMPYLTLLPYLVF). PLD phosphodiesterase domains follow at residues 229–256 (VNFRNHRKVVVVDGECGFVGGHNVGVEY) and 403–430 (QPGFLHQKVVLVDRDTAAVGSANLDNRS). Catalysis depends on residues H234, K236, D241, H408, K410, and D415.

Belongs to the phospholipase D family. Cardiolipin synthase subfamily. ClsA sub-subfamily.

It is found in the cell inner membrane. It catalyses the reaction 2 a 1,2-diacyl-sn-glycero-3-phospho-(1'-sn-glycerol) = a cardiolipin + glycerol. Catalyzes the reversible phosphatidyl group transfer from one phosphatidylglycerol molecule to another to form cardiolipin (CL) (diphosphatidylglycerol) and glycerol. The sequence is that of Cardiolipin synthase A from Pseudomonas aeruginosa (strain LESB58).